Here is a 284-residue protein sequence, read N- to C-terminus: Actin-like protein ARP10 (284 aa).

It belongs to the actin family. ARP10 subfamily. In terms of assembly, self-associates. Component of the dynactin complex composed of at least ARP1, JNM1, NIP100 and ARP10. Dynactin comprises a short rod of the ARP1 filament attached to ARP10 at its pointed-end and probably associated with the capping protein at its barbed-end. The rod is implicated in dynein cargo binding. A sidearm formed by NIP100 projects from the ARP1 filament and is implicated in motor binding. Interacts with ARP1 and JNM1.

It localises to the cytoplasm. The protein resides in the cytoskeleton. Its function is as follows. Pointed-end-associated component of the dynactin complex which assists cytoplasmic dynein by increasing its processivity and by regulation of its cargo binding. The dynactin complex is required for the spindle translocation late in anaphase and is involved in a cell wall synthesis checkpoint. May regulate the association of the dynactin complex with the plasma membrane. The sequence is that of Actin-like protein ARP10 (ARP10) from Saccharomyces cerevisiae (strain ATCC 204508 / S288c) (Baker's yeast).